A 745-amino-acid chain; its full sequence is Single-minded homolog 1-A (745 aa).

In terms of domain architecture, bHLH spans 1–53 (MKEKSKNAGRTRREKENSEFYELAKLLPLPSAITSQSDKASIIRLTTSYLKMR). PAS domains are found at residues 77 to 147 (GREL…QPYH) and 218 to 288 (PPSA…LVKG). The Single-minded C-terminal domain occupies 336–745 (EYKGLQLSLD…GTSVIITNGS (410 aa)). Positions 350-364 (TKPSFTYNSPSNPVT) are enriched in polar residues. 2 disordered regions span residues 350-413 (TKPS…LTDS) and 529-563 (EDSA…EPSK). The Nuclear localization signal signature appears at 368–387 (RVGKSRVSRTKTKTRLSPYS). The segment covering 369–381 (VGKSRVSRTKTKT) has biased composition (basic residues). A compositionally biased stretch (low complexity) spans 532 to 544 (AVSSAPDGGSASD).

As to quaternary structure, efficient DNA binding requires dimerization with another bHLH protein. Heterodimer of sim1a and arnt. In terms of tissue distribution, expressed in embryonic forebrain at the eleven somite stage. Detected in brain throughout embryonic development.

It is found in the nucleus. Functionally, transcriptional factor that may have pleiotropic effects during embryogenesis and in the adult. This Danio rerio (Zebrafish) protein is Single-minded homolog 1-A (sim1a).